A 376-amino-acid chain; its full sequence is Geranylgeranyl transferase type-1 subunit beta (376 aa).

PFTB repeat units follow at residues 128-179 (KRSL…YICG), 192-231 (TEKLLGYIMSQQCYNGAFGAHNEPHSGYTSCALSTLALLS), 259-301 (MKFE…HLLT), and 310-353 (TELV…ALIE). Geranylgeranyl diphosphate is bound by residues 216–218 (HSG) and 280–283 (RENK). 2 residues coordinate Zn(2+): D286 and C288. 289 to 292 (YAFW) is a binding site for geranylgeranyl diphosphate. Residue H341 coordinates Zn(2+).

The protein belongs to the protein prenyltransferase subunit beta family. Heterodimer of an alpha (RAM2) and a beta (CDC43) subunit. Requires Zn(2+) as cofactor. It depends on Mg(2+) as a cofactor.

The protein localises to the cytoplasm. The catalysed reaction is geranylgeranyl diphosphate + L-cysteinyl-[protein] = S-geranylgeranyl-L-cysteinyl-[protein] + diphosphate. Functionally, catalyzes the transfer of a geranyl-geranyl moiety from geranyl-geranyl diphosphate to proteins having the C-terminal sequence Cys-Ile-Ile-Leu or Cys-Val-Leu-Leu. Acts, among other substrates, on Rho1 and Rho2 and CDC42 proteins. Participates in a RAS-like C-terminal modification of proteins involved in nuclear division and bud growth. It is involved in bud positioning and cell polarity. The beta subunit is responsible for isoprenoid and peptide-binding. This chain is Geranylgeranyl transferase type-1 subunit beta (CDC43), found in Saccharomyces cerevisiae (strain ATCC 204508 / S288c) (Baker's yeast).